A 415-amino-acid chain; its full sequence is Casein kinase I isoform delta (415 aa).

The region spanning 9 to 277 is the Protein kinase domain; the sequence is YRLGRKIGSG…YLRQLFRNLF (269 aa). ATP is bound by residues 15-23 and Lys38; that span reads IGSGSFGDI. Residue Asp128 is the Proton acceptor of the active site. The tract at residues 278–364 is centrosomal localization signal (CLS); the sequence is HRQGFSYDYV…TSPRPVSGME (87 aa). Basic and acidic residues predominate over residues 301–315; it reads ADDAERERRDREERL. The tract at residues 301–415 is disordered; it reads ADDAERERRD…SSGLQSVVHR (115 aa). An autoinhibitory region spans residues 317–342; sequence HSRNPATRGLPSTASGRLRGTQEVAP. Phosphoserine occurs at positions 328 and 331. Residues 347-358 are compositionally biased toward polar residues; that stretch reads TPTSHTANTSPR. The residue at position 370 (Ser370) is a Phosphoserine. Arg375 is modified (omega-N-methylarginine). Polar residues predominate over residues 380–400; the sequence is NVSSSDLTGRQDTSRMSTSQI. Phosphoserine is present on residues Ser382, Ser383, Ser384, Pro401, Ser407, and Ser411.

Belongs to the protein kinase superfamily. CK1 Ser/Thr protein kinase family. Casein kinase I subfamily. In terms of assembly, monomer. Component of the circadian core oscillator, which includes the CRY proteins, CLOCK, or NPAS2, BMAL1 or BMAL2, CSNK1D and/or CSNK1E, TIMELESS and the PER proteins. Interacts directly with PER1 and PER2 which may lead to their degradation. Interacts with MAP1A. Interacts with MAPT/TAU, DBNDD2, AIB1/NCOA3 and ESR1. Interacts with AKAP9/AKAP450; this interaction promotes centrosomal subcellular location. Binds to tubulins in mitotic cells upon DNA damage. Interacts with GJA1. Interacts with SNAPIN. Interacts with DNMT1. Interacts with DDX3X; this interaction enhances CSNK1D kinase activity in vitro, but it is unclear whether this interaction is physiologically relevant. Interacts with FAM83A, FAM83B, FAM83E and FAM83H (via DUF1669). Autophosphorylated on serine and threonine residues; this autophosphorylation represses activity. Reactivated by phosphatase-mediated dephosphorylation. May be dephosphorylated by PP1. Expressed ubiquitously. However, kinase activity is not uniform, with highest kinase activity in splenocytes.

It is found in the cytoplasm. The protein resides in the nucleus. The protein localises to the cytoskeleton. It localises to the microtubule organizing center. Its subcellular location is the centrosome. It is found in the perinuclear region. The protein resides in the cell membrane. The protein localises to the spindle. It localises to the golgi apparatus. It catalyses the reaction L-seryl-[protein] + ATP = O-phospho-L-seryl-[protein] + ADP + H(+). It carries out the reaction L-threonyl-[protein] + ATP = O-phospho-L-threonyl-[protein] + ADP + H(+). The enzyme catalyses L-seryl-[tau protein] + ATP = O-phospho-L-seryl-[tau protein] + ADP + H(+). The catalysed reaction is L-threonyl-[tau protein] + ATP = O-phospho-L-threonyl-[tau protein] + ADP + H(+). Exhibits substrate-dependent heparin activation. Drug-mediated inhibition leads to a delay of the oscillations with the magnitude of this effect dependent upon the timing of drug administration. Inhibited by phosphorylation. In terms of biological role, essential serine/threonine-protein kinase that regulates diverse cellular growth and survival processes including Wnt signaling, DNA repair and circadian rhythms. It can phosphorylate a large number of proteins. Casein kinases are operationally defined by their preferential utilization of acidic proteins such as caseins as substrates. Phosphorylates connexin-43/GJA1, MAP1A, SNAPIN, MAPT/TAU, TOP2A, DCK, HIF1A, EIF6, p53/TP53, DVL2, DVL3, ESR1, AIB1/NCOA3, DNMT1, PKD2, YAP1, PER1 and PER2. Central component of the circadian clock. In balance with PP1, determines the circadian period length through the regulation of the speed and rhythmicity of PER1 and PER2 phosphorylation. Controls PER1 and PER2 nuclear transport and degradation. YAP1 phosphorylation promotes its SCF(beta-TRCP) E3 ubiquitin ligase-mediated ubiquitination and subsequent degradation. DNMT1 phosphorylation reduces its DNA-binding activity. Phosphorylation of ESR1 and AIB1/NCOA3 stimulates their activity and coactivation. Phosphorylation of DVL2 and DVL3 regulates WNT3A signaling pathway that controls neurite outgrowth. Phosphorylates NEDD9/HEF1. EIF6 phosphorylation promotes its nuclear export. Triggers down-regulation of dopamine receptors in the forebrain. Activates DCK in vitro by phosphorylation. TOP2A phosphorylation favors DNA cleavable complex formation. May regulate the formation of the mitotic spindle apparatus in extravillous trophoblast. Modulates connexin-43/GJA1 gap junction assembly by phosphorylation. Probably involved in lymphocyte physiology. Regulates fast synaptic transmission mediated by glutamate. In Mus musculus (Mouse), this protein is Casein kinase I isoform delta (Csnk1d).